Consider the following 364-residue polypeptide: Mitoferrin-2 (364 aa).

Residues 1 to 17 (MELEGRGAGGVAGGPAA) are compositionally biased toward gly residues. 2 disordered regions span residues 1-28 (MELE…ESAL) and 40-60 (GAGG…PDSG). A compositionally biased stretch (low complexity) spans 18 to 27 (GPGRSPGESA). Solcar repeat units lie at residues 70–158 (ATVT…LKKT), 168–252 (NSHI…LQEH), and 259–352 (YNPS…FKYL). The next 6 membrane-spanning stretches (helical) occupy residues 72-91 (VTTH…CVMY), 133-152 (GLNV…FACY), 170-189 (HIAN…AAMN), 227-246 (SYTT…FMTY), 261-280 (PSSH…AATT), and 327-346 (GVQA…WSVY).

Belongs to the mitochondrial carrier (TC 2.A.29) family. Ubiquitous. Expressed in placenta, lung, kidney, pancreas, liver, brain, skeletal muscle and heart.

The protein localises to the mitochondrion inner membrane. It catalyses the reaction Fe(2+)(in) = Fe(2+)(out). Its function is as follows. Mitochondrial iron transporter that mediates iron uptake. Probably required for heme synthesis of hemoproteins and Fe-S cluster assembly in non-erythroid cells. The sequence is that of Mitoferrin-2 (SLC25A28) from Homo sapiens (Human).